The following is a 619-amino-acid chain: DEAD-box ATP-dependent RNA helicase 14 (619 aa).

An N-acetylalanine modification is found at A2. The WW domain maps to 17–51; sequence HTLPKPWKGLIDDRTGYLYFWNPETNVTQYEKPTP. The tract at residues 47–139 is disordered; the sequence is EKPTPSLPPK…APASELSPEA (93 aa). Over residues 61–71 the composition is skewed to low complexity; sequence VSVSSSVQVQQ. The segment covering 78-93 has biased composition (basic and acidic residues); sequence PKDDDKYSRGSERVSR. A compositionally biased stretch (low complexity) spans 125 to 139; sequence PLPSSAPASELSPEA. S136 carries the post-translational modification Phosphoserine. The Q motif signature appears at 158-186; the sequence is MSFEATGFPPELLREVLSAGFSAPTPIQA. The Helicase ATP-binding domain maps to 189-363; the sequence is WPIAMQGRDI…ADLLVNPAQV (175 aa). 202 to 209 serves as a coordination point for ATP; that stretch reads AKTGSGKT. Residues 311 to 314 carry the DEAD box motif; that stretch reads DEAD. The 145-residue stretch at 392-536 folds into the Helicase C-terminal domain; the sequence is RLEQILRSQE…RVPPQIREMA (145 aa). The segment at 528–619 is disordered; sequence VPPQIREMAT…FHETMMMKHR (92 aa). The segment covering 552–568 has biased composition (gly residues); sequence PSGGRGRGGDSGYGGRG. Basic and acidic residues-rich tracts occupy residues 582–595 and 609–619; these read GRERERSRSPERFN and SFHETMMMKHR.

It belongs to the DEAD box helicase family. DDX5/DBP2 subfamily. In terms of tissue distribution, ubiquitous. Preferentially expressed in flowers and roots.

The protein localises to the nucleus. It carries out the reaction ATP + H2O = ADP + phosphate + H(+). ATP-dependent RNA helicase involved nonsense-mediated mRNA decay and ribosome biogenesis through rRNA processing. The protein is DEAD-box ATP-dependent RNA helicase 14 (RH14) of Arabidopsis thaliana (Mouse-ear cress).